The sequence spans 178 residues: Large ribosomal subunit protein uL6 (178 aa).

The protein belongs to the universal ribosomal protein uL6 family. In terms of assembly, part of the 50S ribosomal subunit.

Its function is as follows. This protein binds to the 23S rRNA, and is important in its secondary structure. It is located near the subunit interface in the base of the L7/L12 stalk, and near the tRNA binding site of the peptidyltransferase center. The protein is Large ribosomal subunit protein uL6 of Corynebacterium glutamicum (strain R).